The sequence spans 286 residues: Homeobox-leucine zipper protein ATHB-20 (286 aa).

The segment at residues 84–143 (LGEKKKRLQLEQVKALEKSFELGNKLEPERKIQLAKALGMQPRQIAIWFQNRRARWKTRQ) is a DNA-binding region (homeobox). The leucine-zipper stretch occupies residues 144–179 (LERDYDSLKKQFESLKSDNASLLAYNKKLLAEVMAL).

This sequence belongs to the HD-ZIP homeobox family. Class I subfamily. As to expression, widely expressed.

The protein localises to the nucleus. In terms of biological role, probable transcription factor. The polypeptide is Homeobox-leucine zipper protein ATHB-20 (ATHB-20) (Arabidopsis thaliana (Mouse-ear cress)).